A 406-amino-acid polypeptide reads, in one-letter code: Cysteine desulfurase IscS (406 aa).

Pyridoxal 5'-phosphate is bound by residues 75–76 (AT), N155, Q183, and 203–205 (SSH). At K206 the chain carries N6-(pyridoxal phosphate)lysine. T243 contributes to the pyridoxal 5'-phosphate binding site. C330 serves as the catalytic Cysteine persulfide intermediate. C330 contacts [2Fe-2S] cluster.

It belongs to the class-V pyridoxal-phosphate-dependent aminotransferase family. NifS/IscS subfamily. As to quaternary structure, homodimer. Forms a heterotetramer with IscU, interacts with other sulfur acceptors. The cofactor is pyridoxal 5'-phosphate.

It localises to the cytoplasm. The catalysed reaction is (sulfur carrier)-H + L-cysteine = (sulfur carrier)-SH + L-alanine. Its pathway is cofactor biosynthesis; iron-sulfur cluster biosynthesis. Master enzyme that delivers sulfur to a number of partners involved in Fe-S cluster assembly, tRNA modification or cofactor biosynthesis. Catalyzes the removal of elemental sulfur atoms from cysteine to produce alanine. Functions as a sulfur delivery protein for Fe-S cluster synthesis onto IscU, an Fe-S scaffold assembly protein, as well as other S acceptor proteins. This is Cysteine desulfurase IscS from Glaesserella parasuis serovar 5 (strain SH0165) (Haemophilus parasuis).